Consider the following 199-residue polypeptide: MTAAVWTLLLAYLFGSIPAGVLVARTYGVDIRKVGSGNIGATNVLRALGWGPALVVAFFDVFKGGIAVLVARAFGLSDWMLGGVALMAVLGHNYSVFLRFRGGKGVATSFGTLLFLDPALALWTFPIGLSVILLTRYVSAGSMTGGVAAFVLSLALGRPLWEVATVFLMALLIFWTHRENLKRLQEGTERRLGERAEAR.

The next 5 helical transmembrane spans lie at 3-23, 50-70, 78-98, 113-133, and 154-174; these read AAVW…GVLV, WGPA…AVLV, DWML…SVFL, LLFL…SVIL, and LALG…LLIF.

The protein belongs to the PlsY family. Probably interacts with PlsX.

The protein localises to the cell inner membrane. It catalyses the reaction an acyl phosphate + sn-glycerol 3-phosphate = a 1-acyl-sn-glycero-3-phosphate + phosphate. The protein operates within lipid metabolism; phospholipid metabolism. Its function is as follows. Catalyzes the transfer of an acyl group from acyl-phosphate (acyl-PO(4)) to glycerol-3-phosphate (G3P) to form lysophosphatidic acid (LPA). This enzyme utilizes acyl-phosphate as fatty acyl donor, but not acyl-CoA or acyl-ACP. The polypeptide is Glycerol-3-phosphate acyltransferase (Thermus thermophilus (strain ATCC BAA-163 / DSM 7039 / HB27)).